A 369-amino-acid chain; its full sequence is Mannose-1-phosphate guanylyltransferase catalytic subunit beta (369 aa).

Residues 12–231 are substrate-binding domain; the sequence is RALILVGGYG…TGFWMDIGQP (220 aa). Aspartate 120 contacts GDP-alpha-D-mannose. Aspartate 120 contacts Mg(2+). The active site involves lysine 171. Aspartate 227 is a GDP-alpha-D-mannose binding site. Aspartate 227 is a Mg(2+) binding site. Residues 254–369 form a hexapeptide repeat domain region; the sequence is YTGPGVVGNV…ASVPEPQIIM (116 aa).

The protein belongs to the transferase hexapeptide repeat family. In terms of assembly, component of the GMPPA-GMPPB mannose-1-phosphate guanylyltransferase complex composed of 4 Gmppa subunits and 8 Gmppb subunits; the complex is organized into three layers, a central layer made up of 2 Gmppa dimers sandwiched between two layers each made up of 2 Gmppb dimers. Gmppb catalytic activity is reduced when part of the complex and binding of GDP-alpha-D-Mannose by Gmppa induces allosteric feedback inhibition of Gmppb. Requires Mg(2+) as cofactor.

It catalyses the reaction alpha-D-mannose 1-phosphate + GTP + H(+) = GDP-alpha-D-mannose + diphosphate. It functions in the pathway nucleotide-sugar biosynthesis; GDP-alpha-D-mannose biosynthesis; GDP-alpha-D-mannose from alpha-D-mannose 1-phosphate (GTP route): step 1/1. With respect to regulation, enzyme activity is reduced by incorporation into the GMPPA-GMPPB mannose-1-phosphate guanylyltransferase complex. Allosterically inhibited, when part of the GMPPA-GMPPB complex, by GDP-alpha-D-mannose binding to Gmppa. In terms of biological role, catalytic subunit of the GMPPA-GMPPB mannose-1-phosphate guanylyltransferase complex. Catalyzes the formation of GDP-mannose, an essential precursor of glycan moieties of glycoproteins and glycolipids. Can catalyze the reverse reaction in vitro. Together with GMPPA regulates GDP-alpha-D-mannose levels. The protein is Mannose-1-phosphate guanylyltransferase catalytic subunit beta of Drosophila melanogaster (Fruit fly).